A 378-amino-acid polypeptide reads, in one-letter code: Aminotransferase apf4 (378 aa).

Residue R88 participates in pyridoxal 5'-phosphate binding. K189 carries the post-translational modification N6-(pyridoxal phosphate)lysine. Residue E228 participates in pyridoxal 5'-phosphate binding. A disordered region spans residues 359–378; sequence ERGHNGQPTADPTRVIEMPE.

Belongs to the class-IV pyridoxal-phosphate-dependent aminotransferase family. It depends on pyridoxal 5'-phosphate as a cofactor.

It participates in secondary metabolite biosynthesis. In terms of biological role, aminotransferase; part of the gene cluster that mediates the biosynthesis of the cyclic tetrapeptide apicidin F (APF). The non-ribosomal peptide synthetase apf1 incorporates four different amino acids to produce apicidin F: L-phenylalanine, D-pipecolic acid (D-pip), N-methoxy-L-tryptophan and L-2-aminooctanedioic acid. L-Phenylalanine is the only proteinogenic amino acid directly used by apf1. The 3 other apf1 substrates are non-proteinogenic and have to be modified by other enzymes of the cluster. Lysine is converted to delta-1-pyrroline-5-carboxylate (P5C) which is reduced to L-pipecolic acid (L-pip) by apf3. L-pip is epimerized to D-pip, probably by apf1 activity, prior to incorporation. L-Tryptophan is N-oxidyzed by one of the cytochrome P450 monooxygenases (apf7 or apf8), and further methylated at the hydroxy group by the O-methyltransferase apf6 to yield N-methoxy-L-tryptophan. The synthesis of the fourth apf1 substrate is more complex. The fatty acid synthase apf5 is involved in the synthesis of the octanoic acid backbone of L-2-aminooctanedioic acid by fixing one acetyl-CoA unit and three malonyl-CoA units. Then one of the cytochrome P450 monooxygenases (apf7 or apf8) may oxidize this backbone to 2-oxooctanoic acid. The aminotransferase apf4 is predicted to catalyze the exchange of the keto group with an amino group. The next step would be the oxidation of 2-aminooctanoic acid by one of the cytochrome P450 monooxygenases (apf7 or apf8). The last step is the oxidation of 2-amino-8-hydroxyoctanoic acid to 2-aminooctanedioic acid is catalyzed by the FAD-dependent monooxygenase apf9. This chain is Aminotransferase apf4, found in Gibberella fujikuroi (strain CBS 195.34 / IMI 58289 / NRRL A-6831) (Bakanae and foot rot disease fungus).